Consider the following 273-residue polypeptide: Proteasome subunit beta type-10 (273 aa).

Met-1 carries the post-translational modification N-acetylmethionine. Residues 1–39 (MQKTVLEPQRGFSFENCERNAALQRALPGLRVPHARKTG) constitute a propeptide, removed in mature form. Thr-40 serves as the catalytic Nucleophile. Ser-230 is subject to Phosphoserine.

Belongs to the peptidase T1B family. The 26S proteasome consists of a 20S proteasome core and two 19S regulatory subunits. The 20S proteasome core is composed of 28 subunits that are arranged in four stacked rings, resulting in a barrel-shaped structure. The two end rings are each formed by seven alpha subunits, and the two central rings are each formed by seven beta subunits. The catalytic chamber with the active sites is on the inside of the barrel. Component of the immunoproteasome, where it displaces the equivalent housekeeping subunit PSMB7. Component of the spermatoproteasome, a form of the proteasome specifically found in testis. In terms of processing, autocleaved. The resulting N-terminal Thr residue of the mature subunit is responsible for the nucleophile proteolytic activity.

The protein resides in the cytoplasm. The protein localises to the nucleus. The catalysed reaction is Cleavage of peptide bonds with very broad specificity.. The proteasome is a multicatalytic proteinase complex which is characterized by its ability to cleave peptides with Arg, Phe, Tyr, Leu, and Glu adjacent to the leaving group at neutral or slightly basic pH. The proteasome has an ATP-dependent proteolytic activity. This subunit is involved in antigen processing to generate class I binding peptides. This is Proteasome subunit beta type-10 (PSMB10) from Bos taurus (Bovine).